Reading from the N-terminus, the 150-residue chain is Regulatory protein RecX (150 aa).

Belongs to the RecX family.

Its subcellular location is the cytoplasm. In terms of biological role, modulates RecA activity. This chain is Regulatory protein RecX, found in Acidithiobacillus ferrooxidans (strain ATCC 23270 / DSM 14882 / CIP 104768 / NCIMB 8455) (Ferrobacillus ferrooxidans (strain ATCC 23270)).